The following is a 28-amino-acid chain: Morintide mO6 (28 aa).

The Chitin-binding type-1 domain maps to 1–28 (NGLCCSQYGFCGTTSAYCSRANGCQSNC). Intrachain disulfides connect cysteine 4–cysteine 18 and cysteine 24–cysteine 28.

In terms of tissue distribution, seeds (at protein level).

Functionally, chitin-binding protein which functions in defense against chitin-containing fungal pathogens. This chain is Morintide mO6, found in Moringa oleifera (Horseradish tree).